The sequence spans 187 residues: UPF0669 protein C6orf120 homolog (187 aa).

A signal peptide spans 1-23; it reads MVEYWKRNFFMVLVLQAFYLANC. Residue asparagine 47 is glycosylated (N-linked (GlcNAc...) asparagine).

This sequence belongs to the UPF0669 family.

Its subcellular location is the secreted. The sequence is that of UPF0669 protein C6orf120 homolog from Xenopus tropicalis (Western clawed frog).